The primary structure comprises 861 residues: Xylan 1,4-beta-xylosidase (861 aa).

A signal peptide spans 1 to 19 (MKYQLFLSLALCVGLGASA). Asp269 serves as the catalytic Nucleophile. In terms of domain architecture, PA14 spans 458–600 (DGKKGLKGTF…DYQETIAQLK (143 aa)). Glu616 acts as the Proton donor/acceptor in catalysis.

This sequence belongs to the glycosyl hydrolase 3 family. Exists as a large polymeric species, presumably as a homononamer.

The enzyme catalyses Hydrolysis of (1-&gt;4)-beta-D-xylans, to remove successive D-xylose residues from the non-reducing termini.. It carries out the reaction Hydrolysis of terminal non-reducing alpha-L-arabinofuranoside residues in alpha-L-arabinosides.. Its pathway is glycan degradation; xylan degradation. Functionally, involved in degradation of plant cell wall polysaccharides. Has beta-xylosidase activity via its capacity to hydrolyze glycosidic linkages of beta-1,4-xylo-oligosaccharides of various lengths (X2 to X6), releasing xylose monomers. To a much lesser extent, also has alpha-L-arabinofuranosidase activity. Does not possess beta-D-glucosidase activity. Acts synergistically with Xyn10D-Fae1A to increase the release of xylose from xylan. This is Xylan 1,4-beta-xylosidase from Xylanibacter ruminicola (strain ATCC 19189 / DSM 19721 / CIP 105475 / JCM 8958 / 23) (Prevotella ruminicola).